A 172-amino-acid polypeptide reads, in one-letter code: Translation initiation factor IF-3 (172 aa).

This sequence belongs to the IF-3 family. Monomer.

It is found in the cytoplasm. IF-3 binds to the 30S ribosomal subunit and shifts the equilibrium between 70S ribosomes and their 50S and 30S subunits in favor of the free subunits, thus enhancing the availability of 30S subunits on which protein synthesis initiation begins. The polypeptide is Translation initiation factor IF-3 (Oceanobacillus iheyensis (strain DSM 14371 / CIP 107618 / JCM 11309 / KCTC 3954 / HTE831)).